The chain runs to 637 residues: Protein arginine N-methyltransferase 5 (637 aa).

A2 carries the N-acetylalanine modification. The interval 13–292 (RVSSGRDLNC…YLEYLSQNRP (280 aa)) is TIM barrel. The SAM-dependent MTase PRMT-type domain occupies 308–615 (LQSPLQPLMD…SNSKKVWYEW (308 aa)). Y324 serves as a coordination point for S-adenosyl-L-methionine. F327 contacts a protein. S-adenosyl-L-methionine-binding positions include 333–334 (KY), E392, and 419–420 (DM). Positions 435 and 444 each coordinate a protein. Active-site proton donor/acceptor residues include E435 and E444. The tract at residues 465–637 (PGEYTSFLAP…PTGRSYTIGL (173 aa)) is beta barrel. Positions 488-494 (REKDRDP) are dimerization.

It belongs to the class I-like SAM-binding methyltransferase superfamily. Protein arginine N-methyltransferase family. In terms of assembly, forms, at least, homodimers and homotetramers. Component of the methylosome complex, composed of PRMT5, WDR77 and CLNS1A. Found in a complex composed of PRMT5, WDR77 and RIOK1. RIOK1 and CLNS1A associate with PRMT5 in a mutually exclusive fashion, which allows the recruitment of distinct methylation substrates, such as nucleolin/NCL and Sm proteins, respectively. Interacts with PRDM1. Identified in a complex composed of methylosome and PRMT1 and ERH. Interacts with EGFR; methylates EGFR and stimulates EGFR-mediated ERK activation. Interacts with HOXA9. Interacts with SRGAP2. Found in a complex with COPRS, RUNX1 and CBFB. Interacts with CHTOP; the interaction symmetrically methylates CHTOP, but seems to require the presence of PRMT1. Interacts with EPB41L3; this modulates methylation of target proteins. Component of a high molecular weight E2F-pocket protein complex, CERC (cyclin E1 repressor complex). Associates with SWI/SNF remodeling complexes containing SMARCA2 and SMARCA4. Interacts with JAK2, SSTR1, SUPT5H, BRAF and with active RAF1. Interacts with LSM11, PRMT7 and SNRPD3. Interacts with COPRS; promoting its recruitment on histone H4. Interacts with CLNS1A/pICln. Identified in a complex with CLNS1A/pICln and Sm proteins. Interacts with RPS10. Interacts with WDR77. Interacts with IWS1. Interacts with CRY1. Interacts with POLR2A. Interacts with SMN1/SMN2. Interacts with LYAR; this interaction is direct. Interacts with TTC5/STRAP; this interaction is DNA damage-dependent and promotes PRMT5 interaction with p53/TP53. Interacts with p53/TP53 in response to DNA damage; the interaction is TTC5/STRAP dependent. Interacts with FAM47E; the interaction is direct, promotes PRMT5 localization to chromatin, and does not disrupt its association with WDR77 or STUB1. Interacts with TDRD6. Interacts with STUB1. Interacts with MBD2. Does not interact with MBD3.

It is found in the cytoplasm. The protein localises to the nucleus. Its subcellular location is the golgi apparatus. It carries out the reaction L-arginyl-[protein] + 2 S-adenosyl-L-methionine = N(omega),N(omega)'-dimethyl-L-arginyl-[protein] + 2 S-adenosyl-L-homocysteine + 2 H(+). Its activity is regulated as follows. Activity is increased by EGF, HGF, FGF1 or FGF2 treatments, and slightly decreased by NGF treatment. Its function is as follows. Arginine methyltransferase that can both catalyze the formation of omega-N monomethylarginine (MMA) and symmetrical dimethylarginine (sDMA), with a preference for the formation of MMA. Specifically mediates the symmetrical dimethylation of arginine residues in the small nuclear ribonucleoproteins Sm D1 (SNRPD1) and Sm D3 (SNRPD3); such methylation being required for the assembly and biogenesis of snRNP core particles. Methylates SUPT5H and may regulate its transcriptional elongation properties. May methylate the N-terminal region of MBD2. Mono- and dimethylates arginine residues of myelin basic protein (MBP) in vitro. May play a role in cytokine-activated transduction pathways. Negatively regulates cyclin E1 promoter activity and cellular proliferation. Methylates histone H2A and H4 'Arg-3' during germ cell development. Methylates histone H3 'Arg-8', which may repress transcription. Methylates the Piwi proteins (PIWIL1, PIWIL2 and PIWIL4), methylation of Piwi proteins being required for the interaction with Tudor domain-containing proteins and subsequent localization to the meiotic nuage. Methylates RPS10. Attenuates EGF signaling through the MAPK1/MAPK3 pathway acting at 2 levels. First, monomethylates EGFR; this enhances EGFR 'Tyr-1197' phosphorylation and PTPN6 recruitment, eventually leading to reduced SOS1 phosphorylation. Second, methylates RAF1 and probably BRAF, hence destabilizing these 2 signaling proteins and reducing their catalytic activity. Required for induction of E-selectin and VCAM-1, on the endothelial cells surface at sites of inflammation. Methylates HOXA9. Methylates and regulates SRGAP2 which is involved in cell migration and differentiation. Acts as a transcriptional corepressor in CRY1-mediated repression of the core circadian component PER1 by regulating the H4R3 dimethylation at the PER1 promoter. Methylates GM130/GOLGA2, regulating Golgi ribbon formation. Methylates H4R3 in genes involved in glioblastomagenesis in a CHTOP- and/or TET1-dependent manner. Symmetrically methylates POLR2A, a modification that allows the recruitment to POLR2A of proteins including SMN1/SMN2 and SETX. This is required for resolving RNA-DNA hybrids created by RNA polymerase II, that form R-loop in transcription terminal regions, an important step in proper transcription termination. Along with LYAR, binds the promoter of gamma-globin HBG1/HBG2 and represses its expression. Symmetrically methylates NCL. Methylates p53/TP53; methylation might possibly affect p53/TP53 target gene specificity. Involved in spliceosome maturation and mRNA splicing in prophase I spermatocytes through the catalysis of the symmetrical arginine dimethylation of SNRPB (small nuclear ribonucleoprotein-associated protein) and the interaction with tudor domain-containing protein TDRD6. This chain is Protein arginine N-methyltransferase 5 (Prmt5), found in Mus musculus (Mouse).